A 172-amino-acid polypeptide reads, in one-letter code: C-phycocyanin beta chain (172 aa).

Asparagine 72 bears the N4-methylasparagine mark. (2R,3E)-phycocyanobilin-binding residues include cysteine 82 and cysteine 153.

This sequence belongs to the phycobiliprotein family. As to quaternary structure, heterodimer of an alpha and a beta subunit, which further assembles into trimers and the trimers into hexamers. The basic functional unit of phycobiliproteins is a ring-shaped hexamer formed from two back-to-back trimers contacting via the alpha chain subunits. The trimers are composed of alpha/beta subunit heterodimers arranged around a three-fold axis of symmetry. The phycoerythrins also contain a gamma subunit which is located in the center of the hexamer. Post-translationally, contains two covalently linked phycocyanobilin chromophores.

It is found in the plastid. Its subcellular location is the cyanelle thylakoid membrane. Its function is as follows. Light-harvesting photosynthetic bile pigment-protein from the phycobiliprotein complex (phycobilisome, PBS). Phycocyanin is the major phycobiliprotein in the PBS rod. This Cyanophora paradoxa protein is C-phycocyanin beta chain (cpcB).